Here is a 694-residue protein sequence, read N- to C-terminus: DNA polymerase eta (694 aa).

The UmuC domain maps to 9 to 258 (VALVDMDCFF…MPIRKIRSLG (250 aa)). 2 residues coordinate Mg(2+): Asp13 and Met14. 2 residues coordinate Mn(2+): Asp13 and Met14. Arg61 contacts a 2'-deoxyribonucleoside 5'-triphosphate. 2 residues coordinate Mg(2+): Asp115 and Glu116. Mn(2+)-binding residues include Asp115 and Glu116. Glu116 is an active-site residue. The segment at 565-598 (DSGPDDGAVKPVSSKAVSTEMNVAGDSPNVLDSP) is disordered. A UBZ3-type zinc finger spans residues 609-643 (ATEDQVLCEKCDSLVPVWDMPEHTDYHFALELQKS). Positions 616, 619, 631, and 635 each coordinate Zn(2+). Positions 651–694 (KPQAIPAVSPQGKRNPKSPSASSSKRLRPHGMQTLESFFKPLTH) are disordered. Glycyl lysine isopeptide (Lys-Gly) (interchain with G-Cter in ubiquitin) cross-links involve residues Lys663, Lys667, and Lys675. The PIP-box signature appears at 682–689 (MQTLESFF). Lys690 participates in a covalent cross-link: Glycyl lysine isopeptide (Lys-Gly) (interchain with G-Cter in ubiquitin).

It belongs to the DNA polymerase type-Y family. Interacts with REV1. Interacts with monoubiquitinated PCNA, but not unmodified PCNA. Interacts with POLI; this interaction targets POLI to the replication machinery. Interacts with PALB2 and BRCA2; the interactions are direct and are required to sustain the recruitment of POLH at blocked replication forks and to stimulate POLH-dependent DNA synthesis on D loop substrates. Interacts (via C-terminus) with TRAIP. Interacts with ubiquitin. Interacts with POLDIP2. The cofactor is Mg(2+). It depends on Mn(2+) as a cofactor. Post-translationally, monoubiquitinated by RCHY1/PIRH2. Ubiquitination depends on integrity of the UBZ3-type zinc finger domain and is enhanced by TRAIP. Ubiquitination inhibits the ability of PolH to interact with PCNA and to bypass UV-induced lesions. As to expression, ubiquitous.

Its subcellular location is the nucleus. The enzyme catalyses DNA(n) + a 2'-deoxyribonucleoside 5'-triphosphate = DNA(n+1) + diphosphate. With respect to regulation, the enzyme in complex with the DNA substrate binds a third divalent metal cation. The binding of this third divalent cation, which is coordinated by water molecules and two oxygen atoms from DNA and dNTP, is essential for catalyzing the DNA synthesis. Functionally, DNA polymerase specifically involved in the DNA repair by translesion synthesis (TLS). Due to low processivity on both damaged and normal DNA, cooperates with the heterotetrameric (REV3L, REV7, POLD2 and POLD3) POLZ complex for complete bypass of DNA lesions. Inserts one or 2 nucleotide(s) opposite the lesion, the primer is further extended by the tetrameric POLZ complex. In the case of 1,2-intrastrand d(GpG)-cisplatin cross-link, inserts dCTP opposite the 3' guanine. Particularly important for the repair of UV-induced pyrimidine dimers. Although inserts the correct base, may cause base transitions and transversions depending upon the context. May play a role in hypermutation at immunoglobulin genes. Forms a Schiff base with 5'-deoxyribose phosphate at abasic sites, but does not have any lyase activity, preventing the release of the 5'-deoxyribose phosphate (5'-dRP) residue. This covalent trapping of the enzyme by the 5'-dRP residue inhibits its DNA synthetic activity during base excision repair, thereby avoiding high incidence of mutagenesis. Targets POLI to replication foci. This is DNA polymerase eta (Polh) from Mus musculus (Mouse).